The following is a 1034-amino-acid chain: Phosphoenolpyruvate carboxylase (1034 aa).

Active-site residues include His-203 and Lys-680.

This sequence belongs to the PEPCase type 1 family. Requires Mg(2+) as cofactor.

The catalysed reaction is oxaloacetate + phosphate = phosphoenolpyruvate + hydrogencarbonate. In terms of biological role, forms oxaloacetate, a four-carbon dicarboxylic acid source for the tricarboxylic acid cycle. The sequence is that of Phosphoenolpyruvate carboxylase (ppc) from Synechocystis sp. (strain ATCC 27184 / PCC 6803 / Kazusa).